Reading from the N-terminus, the 422-residue chain is p-hydroxyphenylacetate 3-hydroxylase, oxygenase component (422 aa).

Tryptophan 112 serves as a coordination point for FMN. The substrate site is built by histidine 120 and serine 146. FMN-binding positions include 146 to 148 (SSI) and 169 to 171 (WSS). Substrate is bound at residue 263–266 (RPYF). FMN is bound by residues arginine 292, tyrosine 296, 374–375 (AT), and 396–397 (HA). Tyrosine 296 contacts substrate.

It belongs to the HpaH/HsaA monooxygenase family. In terms of assembly, homotetramer. The p-hydroxyphenylacetate 3-hydroxylase (HpaH) is composed of an oxygenase component C2 and a reductase component C1.

It catalyses the reaction 4-hydroxyphenylacetate + FMNH2 + O2 = 3,4-dihydroxyphenylacetate + FMN + H2O + H(+). The catalysed reaction is 4-hydroxyphenylacetate + FADH2 + O2 = 3,4-dihydroxyphenylacetate + FAD + H2O + H(+). It functions in the pathway aromatic compound metabolism; 4-hydroxyphenylacetate degradation; pyruvate and succinate semialdehyde from 4-hydroxyphenylacetate: step 1/7. Its activity is regulated as follows. Inhibited by flavin concentrations greater than 15 uM. Also inhibited by excess p-hydroxyphenylacetate (HPA). In terms of biological role, oxygenase component of a two-component system that utilizes reduced FMN (FMNH2) supplied by the reductase component to catalyze the hydroxylation of 4-hydroxyphenylacetic acid, leading to the production of 3,4-dihydroxyphenylacetate (3,4-DHPA). Also utilizes other reduced flavins such as FADH2 and reduced riboflavin to a lesser extent. Only the compounds with a hydroxyl group in the para (p-) position can be hydroxylated. May also oxidize phenol to catechol, and hydroxylate other phenol derivatives. This is p-hydroxyphenylacetate 3-hydroxylase, oxygenase component from Acinetobacter baumannii.